The chain runs to 423 residues: Glycine amidinotransferase, mitochondrial (423 aa).

A mitochondrion-targeting transit peptide spans 1-43; sequence MLRVRCLRGGSRGAEAVHYIGSRLGRTLTGWVQRTFQSTQAAT. Ser-46 and Ser-49 each carry phosphoserine. Residue Asp-170 participates in arginine binding. Catalysis depends on residues Asp-254 and His-303. Arginine contacts are provided by Asp-305, Arg-322, Ser-354, and Ser-355. Position 385 is an N6-acetyllysine (Lys-385). Cys-407 functions as the Amidino-cysteine intermediate in the catalytic mechanism.

This sequence belongs to the amidinotransferase family. In terms of assembly, homodimer. There is an equilibrium between the monomeric and dimeric forms, shifted towards the side of the monomer. As to expression, expressed in brain, heart, kidney, liver, lung, salivary gland and skeletal muscle tissue, with the highest expression in kidney. Biallelically expressed in placenta and fetal tissues.

It localises to the mitochondrion inner membrane. Its subcellular location is the cytoplasm. It catalyses the reaction L-arginine + glycine = guanidinoacetate + L-ornithine. The catalysed reaction is 4-aminobutanoate + L-arginine = 4-guanidinobutanoate + L-ornithine. The enzyme catalyses beta-alanine + L-arginine = 3-guanidinopropanoate + L-ornithine. It carries out the reaction taurine + L-arginine = taurocyamine + L-ornithine. Its pathway is amine and polyamine biosynthesis; creatine biosynthesis; creatine from L-arginine and glycine: step 1/2. In terms of biological role, transamidinase that catalyzes the transfer of the amidino group of L-arginine onto the amino moiety of acceptor metabolites such as glycine, beta-alanine, gamma-aminobutyric acid (GABA) and taurine yielding the corresponding guanidine derivatives. Catalyzes the rate-limiting step of creatine biosynthesis, namely the transfer of the amidino group from L-arginine to glycine to generate guanidinoacetate, which is then methylated by GAMT to form creatine. Provides creatine as a source for ATP generation in tissues with high energy demands, in particular skeletal muscle, heart and brain. This is Glycine amidinotransferase, mitochondrial (GATM) from Homo sapiens (Human).